Reading from the N-terminus, the 257-residue chain is Adenosylcobinamide-GDP ribazoletransferase (257 aa).

The next 7 helical transmembrane spans lie at 30-50 (IVYFPLVGFVIGILSYLIGWI), 52-72 (MLLFEPFIASIIITLAGVLIT), 109-129 (SLLAIMFVLLLKVGFVYDIIS), 132-152 (SLWVIIFMPMIARLGVMLLTY), 175-195 (LITAIIYTLLIVALITKFIFL), 198-218 (NIVLIKVLGSIIVVFVFIILF), and 237-257 (GIELSELVYLIYIYLLIFMFF).

It belongs to the CobS family. It depends on Mg(2+) as a cofactor.

The protein localises to the cell membrane. It carries out the reaction alpha-ribazole + adenosylcob(III)inamide-GDP = adenosylcob(III)alamin + GMP + H(+). The catalysed reaction is alpha-ribazole 5'-phosphate + adenosylcob(III)inamide-GDP = adenosylcob(III)alamin 5'-phosphate + GMP + H(+). The protein operates within cofactor biosynthesis; adenosylcobalamin biosynthesis; adenosylcobalamin from cob(II)yrinate a,c-diamide: step 7/7. Joins adenosylcobinamide-GDP and alpha-ribazole to generate adenosylcobalamin (Ado-cobalamin). Also synthesizes adenosylcobalamin 5'-phosphate from adenosylcobinamide-GDP and alpha-ribazole 5'-phosphate. This is Adenosylcobinamide-GDP ribazoletransferase from Clostridioides difficile (strain 630) (Peptoclostridium difficile).